The sequence spans 358 residues: Endo-1,4-beta-xylanase B (358 aa).

The N-terminal stretch at 1 to 17 (MRFSASLLLALTGSAAA) is a signal peptide. Residues 40-352 (QGLDAAMKAA…KAAYNAFLRG (313 aa)) form the GH10 domain. N-linked (GlcNAc...) asparagine glycosylation is present at Asn136. Residue Glu166 is the Proton donor of the active site. Residue Glu274 is the Nucleophile of the active site.

It belongs to the glycosyl hydrolase 10 (cellulase F) family.

The protein resides in the secreted. The enzyme catalyses Endohydrolysis of (1-&gt;4)-beta-D-xylosidic linkages in xylans.. The protein operates within glycan degradation; xylan degradation. Its activity is regulated as follows. Partial inhibition of activity is detected in the presence of Ag(+), Cu2(+) and SDS. Like most fungal xylanases, activity is completely inhibited by Hg(2+) since Hg(2+) could interact with tryptophan residues and oxidize the indole ring. Beta-mercaptoethanol enhances the enzymatic activity by counteracting the oxidation effects of the S-S linkage between cysteine residues. In terms of biological role, endo-1,4-beta-xylanase involved in the hydrolysis of xylan, a major structural heterogeneous polysaccharide found in plant biomass representing the second most abundant polysaccharide in the biosphere, after cellulose. Is more active on soluble wheat arabinoxylan (defined as 100%) than on birchwood xylan (75.4%) and beechwood xylan (70.8%), and less active on insoluble wheat arabinoxylan (17.4%). Xylose is the major hydrolysis product of XynB. The polypeptide is Endo-1,4-beta-xylanase B (Humicola insolens (Soft-rot fungus)).